Consider the following 184-residue polypeptide: Oligoribonuclease (184 aa).

Residues 7–170 (LIWIDLEMTG…DDIRESVAEL (164 aa)) form the Exonuclease domain. Tyr-128 is an active-site residue.

This sequence belongs to the oligoribonuclease family.

The protein localises to the cytoplasm. In terms of biological role, 3'-to-5' exoribonuclease specific for small oligoribonucleotides. The chain is Oligoribonuclease from Baumannia cicadellinicola subsp. Homalodisca coagulata.